Reading from the N-terminus, the 396-residue chain is Elongation factor Tu (396 aa).

A tr-type G domain is found at lysine 10–threonine 206. Residues glycine 19–threonine 26 form a G1 region. Glycine 19 to threonine 26 contacts GTP. Mg(2+) is bound at residue threonine 26. Residues glycine 60–serine 64 are G2. The tract at residues aspartate 81 to glycine 84 is G3. Residues aspartate 81–histidine 85 and asparagine 136–aspartate 139 each bind GTP. The interval asparagine 136–aspartate 139 is G4. The tract at residues serine 174 to leucine 176 is G5.

This sequence belongs to the TRAFAC class translation factor GTPase superfamily. Classic translation factor GTPase family. EF-Tu/EF-1A subfamily. Monomer.

Its subcellular location is the cytoplasm. The enzyme catalyses GTP + H2O = GDP + phosphate + H(+). Its function is as follows. GTP hydrolase that promotes the GTP-dependent binding of aminoacyl-tRNA to the A-site of ribosomes during protein biosynthesis. The polypeptide is Elongation factor Tu (Pelagibacter ubique (strain HTCC1062)).